The primary structure comprises 512 residues: Multidrug resistance protein 3 (512 aa).

14 helical membrane-spanning segments follow: residues Phe-13–Ala-33, Lys-48–Gly-68, Phe-79–Thr-99, Ile-109–Phe-129, Gly-139–Ile-159, Ile-163–Ile-183, Trp-200–Gly-220, Ser-228–Val-248, Ile-272–Val-292, Gly-304–Phe-324, Leu-333–Pro-353, Val-358–Leu-378, Ser-399–Phe-421, and Ile-475–Phe-495.

Belongs to the major facilitator superfamily. EmrB family.

The protein resides in the cell membrane. Confers resistance to puromycin, tosufloxacin and norfloxacin. The chain is Multidrug resistance protein 3 (bmr3) from Bacillus subtilis (strain 168).